The sequence spans 270 residues: Putative phosphoenolpyruvate synthase regulatory protein (270 aa).

150-157 lines the ADP pocket; that stretch reads GVSRCGKT.

Belongs to the pyruvate, phosphate/water dikinase regulatory protein family. PSRP subfamily.

It catalyses the reaction [pyruvate, water dikinase] + ADP = [pyruvate, water dikinase]-phosphate + AMP + H(+). The enzyme catalyses [pyruvate, water dikinase]-phosphate + phosphate + H(+) = [pyruvate, water dikinase] + diphosphate. Bifunctional serine/threonine kinase and phosphorylase involved in the regulation of the phosphoenolpyruvate synthase (PEPS) by catalyzing its phosphorylation/dephosphorylation. The sequence is that of Putative phosphoenolpyruvate synthase regulatory protein from Aeromonas salmonicida (strain A449).